The primary structure comprises 610 residues: Butyryl-CoA dehydrogenase Swol_1933 (610 aa).

Catalysis depends on Glu-451, which acts as the Proton acceptor.

The protein belongs to the acyl-CoA dehydrogenase family. FAD is required as a cofactor.

The protein localises to the cytoplasm. The catalysed reaction is butanoyl-CoA + oxidized [electron-transfer flavoprotein] + H(+) = (2E)-butenoyl-CoA + reduced [electron-transfer flavoprotein]. The enzyme catalyses a short-chain 2,3-saturated fatty acyl-CoA + oxidized [electron-transfer flavoprotein] + H(+) = a short-chain (2E)-enoyl-CoA + reduced [electron-transfer flavoprotein]. It participates in lipid metabolism; butanoate metabolism. Functionally, involved in syntrophic growth of S.wolfei with butyrate, as part of the butyrate oxidation pathway. Catalyzes the oxidation of butanoyl-CoA to crotonyl-CoA. Probably passes the electrons released by this reaction on to electron-transfer flavoproteins (EtfAB) to finally generate hydrogen and/or formate. The polypeptide is Butyryl-CoA dehydrogenase Swol_1933 (Syntrophomonas wolfei subsp. wolfei (strain DSM 2245B / Goettingen)).